The sequence spans 257 residues: Large ribosomal subunit protein uL2 (257 aa).

Glycyl lysine isopeptide (Lys-Gly) (interchain with G-Cter in SUMO2) cross-links involve residues Lys-42 and Lys-149. The tract at residues 207–232 is disordered; the sequence is VEHPFGGGNHQHIGKPSTIRRDAPAG. Position 216 is a (3S)-3-hydroxyhistidine (His-216). Glycyl lysine isopeptide (Lys-Gly) (interchain with G-Cter in SUMO2) cross-links involve residues Lys-234 and Lys-250.

The protein belongs to the universal ribosomal protein uL2 family. Component of the large ribosomal subunit. Interacts with CRY1. In terms of processing, hydroxylated on His-216 by RIOX1. The modification is impaired by hypoxia.

Its subcellular location is the cytoplasm. Component of the large ribosomal subunit. The ribosome is a large ribonucleoprotein complex responsible for the synthesis of proteins in the cell. In Bos taurus (Bovine), this protein is Large ribosomal subunit protein uL2 (RPL8).